The sequence spans 190 residues: MKFLFDLFPVILFFAAFKVAGIYVATTVAMVATVLQIAWVWFKHRKVDAMQWLSLLIIGVFGGATLIFHNETFIKWKPTVLYWLFGVVLLGSVVVVRKNLIRAMMEQQVSLPETMWGRLNLVWALFFLVMGCLNLYVAYNFDTDVWVNFKLFGSMGLMVVFILAQSVWLARHMQERPANAANDANIGDDR.

The next 6 helical transmembrane spans lie at 3–23 (FLFDLFPVILFFAAFKVAGIY), 24–44 (VATTVAMVATVLQIAWVWFKH), 49–69 (AMQWLSLLIIGVFGGATLIFH), 76–96 (WKPTVLYWLFGVVLLGSVVVV), 121–141 (LVWALFFLVMGCLNLYVAYNF), and 149–169 (FKLFGSMGLMVVFILAQSVWL).

This sequence belongs to the YciB family.

It is found in the cell inner membrane. Its function is as follows. Plays a role in cell envelope biogenesis, maintenance of cell envelope integrity and membrane homeostasis. This is Inner membrane-spanning protein YciB from Ralstonia pickettii (strain 12J).